Consider the following 571-residue polypeptide: uncharacterized protein (571 aa).

3 disordered regions span residues 71 to 128, 142 to 258, and 298 to 336; these read TNHY…RVTA, NKND…PQNE, and LNRQPETRRNCQCPEKQQTPPPEETQNAQENDDQQTTKR. Residues 88–113 show a composition bias toward polar residues; the sequence is PNRSGVSSPVNDGASSPTQRGGTTPA. Positions 168–184 are enriched in pro residues; the sequence is RGYPGPGPRGYPGPGPR. A compositionally biased stretch (low complexity) spans 205-215; the sequence is QGPRRYSCPGP. The span at 217–234 shows a compositional bias: gly residues; the sequence is GYPGPGSSGRPDPGGGLQ. Residues 311-326 show a composition bias toward low complexity; it reads PEKQQTPPPEETQNAQ.

This is an uncharacterized protein from Drosophila melanogaster (Fruit fly).